The primary structure comprises 162 residues: Phosphopantetheine adenylyltransferase (162 aa).

Serine 9 contacts substrate. ATP-binding positions include 9–10 and histidine 17; that span reads SF. Residues lysine 41, valine 77, and lysine 91 each coordinate substrate. ATP-binding positions include 92–94, glutamate 102, and 126–132; these read GLR and YAFLSSS.

It belongs to the bacterial CoaD family. Homohexamer. The cofactor is Mg(2+).

The protein resides in the cytoplasm. The catalysed reaction is (R)-4'-phosphopantetheine + ATP + H(+) = 3'-dephospho-CoA + diphosphate. It functions in the pathway cofactor biosynthesis; coenzyme A biosynthesis; CoA from (R)-pantothenate: step 4/5. Functionally, reversibly transfers an adenylyl group from ATP to 4'-phosphopantetheine, yielding dephospho-CoA (dPCoA) and pyrophosphate. The polypeptide is Phosphopantetheine adenylyltransferase (Frankia alni (strain DSM 45986 / CECT 9034 / ACN14a)).